The following is a 346-amino-acid chain: DNA-directed RNA polymerase subunit alpha (346 aa).

Residues 1–233 (MLRDEVAVSA…DLFIPFLHAE (233 aa)) form an alpha N-terminal domain (alpha-NTD) region. The segment at 268–346 (IELKCIFIDQ…NKFLIGNPSE (79 aa)) is alpha C-terminal domain (alpha-CTD).

This sequence belongs to the RNA polymerase alpha chain family. As to quaternary structure, in plastids the minimal PEP RNA polymerase catalytic core is composed of four subunits: alpha, beta, beta', and beta''. When a (nuclear-encoded) sigma factor is associated with the core the holoenzyme is formed, which can initiate transcription.

It localises to the plastid. Its subcellular location is the chloroplast. The catalysed reaction is RNA(n) + a ribonucleoside 5'-triphosphate = RNA(n+1) + diphosphate. In terms of biological role, DNA-dependent RNA polymerase catalyzes the transcription of DNA into RNA using the four ribonucleoside triphosphates as substrates. The chain is DNA-directed RNA polymerase subunit alpha from Ranunculus macranthus (Large buttercup).